Reading from the N-terminus, the 1416-residue chain is DNA-directed RNA polymerase subunit beta (1416 aa).

The protein belongs to the RNA polymerase beta chain family. In plastids the minimal PEP RNA polymerase catalytic core is composed of four subunits: alpha, beta, beta', and beta''. When a (nuclear-encoded) sigma factor is associated with the core the holoenzyme is formed, which can initiate transcription.

The protein resides in the plastid. Its subcellular location is the chloroplast. The catalysed reaction is RNA(n) + a ribonucleoside 5'-triphosphate = RNA(n+1) + diphosphate. DNA-dependent RNA polymerase catalyzes the transcription of DNA into RNA using the four ribonucleoside triphosphates as substrates. This Oltmannsiellopsis viridis (Marine flagellate) protein is DNA-directed RNA polymerase subunit beta.